The primary structure comprises 74 residues: Guanine nucleotide-binding protein G(T) subunit gamma-T1 (74 aa).

Cys-71 is subject to Cysteine methyl ester. The S-farnesyl cysteine moiety is linked to residue Cys-71. A propeptide spans 72–74 (VIS) (removed in mature form).

The protein belongs to the G protein gamma family. In terms of assembly, g proteins are composed of 3 units, alpha, beta and gamma. Retinal rod outer segment.

It is found in the cell membrane. Guanine nucleotide-binding proteins (G proteins) are involved as a modulator or transducer in various transmembrane signaling systems. The beta and gamma chains are required for the GTPase activity, for replacement of GDP by GTP, and for G protein-effector interaction. This Bos taurus (Bovine) protein is Guanine nucleotide-binding protein G(T) subunit gamma-T1 (GNGT1).